The primary structure comprises 317 residues: WSCD family member AAEL009094 (317 aa).

A helical transmembrane segment spans residues 8-28; that stretch reads LFGLAGTILVYIGGILFLSFV. N-linked (GlcNAc...) asparagine glycans are attached at residues asparagine 150, asparagine 226, and asparagine 232.

Belongs to the WSCD family.

It localises to the membrane. The chain is WSCD family member AAEL009094 from Aedes aegypti (Yellowfever mosquito).